The sequence spans 462 residues: Glutamate--tRNA ligase 2 (462 aa).

The 'HIGH' region signature appears at proline 8–glycine 18. A 'KMSKS' region motif is present at residues proline 227–arginine 231. Lysine 230 is an ATP binding site.

Belongs to the class-I aminoacyl-tRNA synthetase family. Glutamate--tRNA ligase type 1 subfamily. Monomer.

Its subcellular location is the cytoplasm. The enzyme catalyses tRNA(Glu) + L-glutamate + ATP = L-glutamyl-tRNA(Glu) + AMP + diphosphate. Its function is as follows. Catalyzes the attachment of glutamate to tRNA(Glu) in a two-step reaction: glutamate is first activated by ATP to form Glu-AMP and then transferred to the acceptor end of tRNA(Glu). This is Glutamate--tRNA ligase 2 from Thermosipho melanesiensis (strain DSM 12029 / CIP 104789 / BI429).